A 37-amino-acid polypeptide reads, in one-letter code: Cytochrome b6-f complex subunit 5 (37 aa).

A helical membrane pass occupies residues 5 to 25 (LLSGIVLGLIPITLAGLFVTA).

This sequence belongs to the PetG family. The 4 large subunits of the cytochrome b6-f complex are cytochrome b6, subunit IV (17 kDa polypeptide, PetD), cytochrome f and the Rieske protein, while the 4 small subunits are PetG, PetL, PetM and PetN. The complex functions as a dimer.

Its subcellular location is the plastid. It localises to the chloroplast thylakoid membrane. Component of the cytochrome b6-f complex, which mediates electron transfer between photosystem II (PSII) and photosystem I (PSI), cyclic electron flow around PSI, and state transitions. PetG is required for either the stability or assembly of the cytochrome b6-f complex. In Zygnema circumcarinatum (Green alga), this protein is Cytochrome b6-f complex subunit 5.